The chain runs to 130 residues: ATP synthase epsilon chain, chloroplastic (130 aa).

It belongs to the ATPase epsilon chain family. In terms of assembly, F-type ATPases have 2 components, CF(1) - the catalytic core - and CF(0) - the membrane proton channel. CF(1) has five subunits: alpha(3), beta(3), gamma(1), delta(1), epsilon(1). CF(0) has three main subunits: a, b and c.

The protein resides in the plastid. Its subcellular location is the chloroplast thylakoid membrane. Produces ATP from ADP in the presence of a proton gradient across the membrane. In Tupiella akineta (Green alga), this protein is ATP synthase epsilon chain, chloroplastic.